The primary structure comprises 328 residues: Extracellular exo-alpha-(1-&gt;5)-L-arabinofuranosidase (328 aa).

A signal peptide (tat-tyPE signal) is located at residues 1–43 (MCTREAVRMSREHDLPEIPSRRLLLKGAAAAGALTAVPGVAHA). Asp60 acts as the Proton acceptor in catalysis. Glu236 serves as the catalytic Proton donor.

The protein belongs to the glycosyl hydrolase 43 family. Predicted to be exported by the Tat system. The position of the signal peptide cleavage has been experimentally proven.

Its subcellular location is the secreted. The catalysed reaction is Hydrolysis of terminal non-reducing alpha-L-arabinofuranoside residues in alpha-L-arabinosides.. The protein operates within glycan metabolism; L-arabinan degradation. In terms of biological role, involved in the degradation of arabinan and is a key enzyme in the complete degradation of the plant cell wall. Catalyzes only the cleavage of terminal alpha-(1-&gt;5) arabinofuranosyl bonds of arabinan present in the arabinofuranosyl polysaccharides or oligosaccharides. It cannot act on other arabinose-containing polysaccharides and arabinoxylo-oligosaccharides. In Streptomyces chartreusis, this protein is Extracellular exo-alpha-(1-&gt;5)-L-arabinofuranosidase.